The following is a 422-amino-acid chain: L-threonine dehydratase biosynthetic IlvA (422 aa).

At lysine 56 the chain carries N6-(pyridoxal phosphate)lysine. Residues asparagine 83, 189 to 193 (GGGGL), and serine 315 each bind pyridoxal 5'-phosphate. The ACT-like domain occupies 339–413 (HYFILNFPQR…FDKSNIYINE (75 aa)).

It belongs to the serine/threonine dehydratase family. Homotetramer. Pyridoxal 5'-phosphate is required as a cofactor.

It catalyses the reaction L-threonine = 2-oxobutanoate + NH4(+). Its pathway is amino-acid biosynthesis; L-isoleucine biosynthesis; 2-oxobutanoate from L-threonine: step 1/1. In terms of biological role, catalyzes the anaerobic formation of alpha-ketobutyrate and ammonia from threonine in a two-step reaction. The first step involved a dehydration of threonine and a production of enamine intermediates (aminocrotonate), which tautomerizes to its imine form (iminobutyrate). Both intermediates are unstable and short-lived. The second step is the nonenzymatic hydrolysis of the enamine/imine intermediates to form 2-ketobutyrate and free ammonia. In the low water environment of the cell, the second step is accelerated by RidA. The polypeptide is L-threonine dehydratase biosynthetic IlvA (ilvA) (Staphylococcus saprophyticus subsp. saprophyticus (strain ATCC 15305 / DSM 20229 / NCIMB 8711 / NCTC 7292 / S-41)).